Reading from the N-terminus, the 352-residue chain is MDYQVSSPTYDIDYYTSEPCQKVNVKQIAARLLPPLYSLVFIFGFVGNILVVLILINCKRLKSMTDIYLLNLAISDLFFLLTVPFWAHYAAAQWDFGNTMCQLLTGLYFIGFFSGIFFIILLTIDRYLAIVHAVFALKARTVTFGVVTSVITWVVAVFASLPGIIFTRSQREGVHYTCSSHFPYSQYQFWKNFQTLKIVILGLVLPLLVMVICYSGILKTLLRCRNEKKRHRAVRLIFTIMIVYFLFWAPYNIVLLLNTFQEFFGLNNCSSSNRLDQAMQVTETLGMTHCCINPIIYAFVGEKFRNYLLVFFQKHIAKRFCKCCSIFQQEAPERASSVYTRSTGEQETSVGL.

Residues 1–30 (MDYQVSSPTYDIDYYTSEPCQKVNVKQIAA) lie on the Extracellular side of the membrane. Sulfotyrosine is present on Tyr-3. 2 O-linked (GalNAc...) serine glycosylation sites follow: Ser-6 and Ser-7. A sulfotyrosine mark is found at Tyr-10, Tyr-14, and Tyr-15. Intrachain disulfides connect Cys-20/Cys-269 and Cys-101/Cys-178. Residues 31 to 58 (RLLPPLYSLVFIFGFVGNILVVLILINC) traverse the membrane as a helical segment. Residues 59-68 (KRLKSMTDIY) lie on the Cytoplasmic side of the membrane. Residues 69–89 (LLNLAISDLFFLLTVPFWAHY) traverse the membrane as a helical segment. At 90-102 (AAAQWDFGNTMCQ) the chain is on the extracellular side. A helical membrane pass occupies residues 103-124 (LLTGLYFIGFFSGIFFIILLTI). At 125-141 (DRYLAIVHAVFALKART) the chain is on the cytoplasmic side. Residues 142-166 (VTFGVVTSVITWVVAVFASLPGIIF) form a helical membrane-spanning segment. Residues 167-198 (TRSQREGVHYTCSSHFPYSQYQFWKNFQTLKI) are Extracellular-facing. A helical transmembrane segment spans residues 199-218 (VILGLVLPLLVMVICYSGIL). The Cytoplasmic portion of the chain corresponds to 219 to 235 (KTLLRCRNEKKRHRAVR). The chain crosses the membrane as a helical span at residues 236–260 (LIFTIMIVYFLFWAPYNIVLLLNTF). Residues 261–277 (QEFFGLNNCSSSNRLDQ) lie on the Extracellular side of the membrane. Residues 278–301 (AMQVTETLGMTHCCINPIIYAFVG) traverse the membrane as a helical segment. The Cytoplasmic portion of the chain corresponds to 302–352 (EKFRNYLLVFFQKHIAKRFCKCCSIFQQEAPERASSVYTRSTGEQETSVGL). 3 S-palmitoyl cysteine lipidation sites follow: Cys-321, Cys-323, and Cys-324. Ser-336, Ser-337, Ser-342, and Ser-349 each carry phosphoserine; by BARK1.

It belongs to the G-protein coupled receptor 1 family. As to quaternary structure, interacts with PRAF2. Efficient ligand binding to CCL3/MIP-1alpha and CCL4/MIP-1beta requires sulfation, O-glycosylation and sialic acid modifications. Glycosylation on Ser-6 is required for efficient binding of CCL4. Interacts with GRK2. Interacts with ARRB1 and ARRB2. Interacts with CNIH4. Interacts with S100A4; this interaction stimulates T-lymphocyte chemotaxis. In terms of processing, sulfated on at least 2 of the N-terminal tyrosines. Sulfation is required for efficient binding of the chemokines, CCL3 and CCL4. Palmitoylation in the C-terminal is important for cell surface expression. Post-translationally, phosphorylation on serine residues in the C-terminal is stimulated by binding CC chemokines especially by APO-RANTES. In terms of processing, O-glycosylated, but not N-glycosylated. Ser-6 appears to be the major site even if Ser-7 may be also O-glycosylated. Also sialylated glycans present which contribute to chemokine binding. Thr-16 and Ser-17 may also be glycosylated and, if so, with small moieties such as a T-antigen.

It is found in the cell membrane. Its function is as follows. Receptor for a number of inflammatory CC-chemokines including CCL3/MIP-1-alpha, CCL4/MIP-1-beta and RANTES and subsequently transduces a signal by increasing the intracellular calcium ion level. May play a role in the control of granulocytic lineage proliferation or differentiation. Participates in T-lymphocyte migration to the infection site by acting as a chemotactic receptor. The polypeptide is C-C chemokine receptor type 5 (CCR5) (Rhinopithecus avunculus (Tonkin snub-nosed monkey)).